A 481-amino-acid polypeptide reads, in one-letter code: MRFSVFTAAIAAAFSACCATASPAVNYVNSLILQRADPHIVKHTDGWYYFTATVPEYDRIVLRRAQTIQGLQSAPETVIWRRKAFGVGSGQVWAPELHYIDGRWYIYVALGVSGQWRIRAFVLEGVGANPLTASWTEKGIIQTNWDTFSLDATTFVANGTRYLVWAQQDPSRNGENSSLFIAPLQNPWTIRGPAVAISHPDLSWERIGYKVNEGPAVIQRNGRIFLTYSASATDHNYCMGLLTARADANLMNPASWVKSQQPIFVSNAATNQWGPGHNQFTVSEDGLSDILVYHDRGYRDINGDPLNDPNRRTRVQKLYWRDDGTPDFGIPVPDGPTPVRLRVAANGASSNGAYVRFYTTTGSGNLTGTAALPDTQFKLVSPGLSGGDSVSLESTSNPGTYVRRVSGSTAVQFERGTALNTAALRASASFRRVPGLSDSGGAVSFESVESPGQYLRLDPNGRLSVASVAEGTQGRSTFYLE.

An N-terminal signal peptide occupies residues 1-19; the sequence is MRFSVFTAAIAAAFSACCA. N-linked (GlcNAc...) asparagine glycans are attached at residues Asn158, Asn176, and Asn365.

This sequence belongs to the glycosyl hydrolase 43 family.

The protein resides in the secreted. The catalysed reaction is Hydrolysis of terminal non-reducing alpha-L-arabinofuranoside residues in alpha-L-arabinosides.. Its activity is regulated as follows. Activity is significantly inhibited by SDS and partially inhibited by Ag(+), Fe(3+) and beta-mercaptoethanol. Its function is as follows. Alpha-L-arabinofuranosidase specific for the cleavage of alpha-1,3-linkage. Shows high activity against 4-nitrophenyl alpha-L-arabinofuranoside, debranched arabinan, and sugar beet arabinan. In Humicola insolens (Soft-rot fungus), this protein is Alpha-L-arabinofuranosidase 43.